A 755-amino-acid chain; its full sequence is Xaa-Pro dipeptidyl-peptidase (755 aa).

Active-site charge relay system residues include S348, D468, and H498.

The protein belongs to the peptidase S15 family. As to quaternary structure, homodimer.

It localises to the cytoplasm. The enzyme catalyses Hydrolyzes Xaa-Pro-|- bonds to release unblocked, N-terminal dipeptides from substrates including Ala-Pro-|-p-nitroanilide and (sequentially) Tyr-Pro-|-Phe-Pro-|-Gly-Pro-|-Ile.. In terms of biological role, removes N-terminal dipeptides sequentially from polypeptides having unsubstituted N-termini provided that the penultimate residue is proline. This Streptococcus thermophilus (strain ATCC BAA-491 / LMD-9) protein is Xaa-Pro dipeptidyl-peptidase.